A 265-amino-acid polypeptide reads, in one-letter code: Early E4 31 kDa protein (265 aa).

The protein belongs to the adenoviridae E4 30 to 34 kDa protein family. As to quaternary structure, interacts with E1B-55k.

Its subcellular location is the host nucleus. It is found in the host cytoplasm. Functionally, plays a major role to prevent cellular inhibition of viral genome replication by nuclear bodies. Assembles an SCF-like E3 ubiquitin ligase complex based on the cellular proteins ELOB, ELOC, CUL5 and RBX1, in cooperation with viral E1B-55K. This viral RING-type ligase ubiquitinates cellular substrates prior to proteasomal degradation: p53/TP53, LIG4, MRE11-RAD50-NBS1 (MRN) complex, ITGA3, DAXX and BLM. The polypeptide is Early E4 31 kDa protein (Canine adenovirus serotype 1 (strain RI261) (CAdV-1)).